A 476-amino-acid polypeptide reads, in one-letter code: 3-isopropylmalate dehydratase large subunit (476 aa).

Positions 357, 417, and 420 each coordinate [4Fe-4S] cluster.

Belongs to the aconitase/IPM isomerase family. LeuC type 1 subfamily. As to quaternary structure, heterodimer of LeuC and LeuD. Requires [4Fe-4S] cluster as cofactor.

It catalyses the reaction (2R,3S)-3-isopropylmalate = (2S)-2-isopropylmalate. Its pathway is amino-acid biosynthesis; L-leucine biosynthesis; L-leucine from 3-methyl-2-oxobutanoate: step 2/4. In terms of biological role, catalyzes the isomerization between 2-isopropylmalate and 3-isopropylmalate, via the formation of 2-isopropylmaleate. The protein is 3-isopropylmalate dehydratase large subunit of Mycolicibacterium paratuberculosis (strain ATCC BAA-968 / K-10) (Mycobacterium paratuberculosis).